The chain runs to 454 residues: tRNA modification GTPase MnmE (454 aa).

3 residues coordinate (6S)-5-formyl-5,6,7,8-tetrahydrofolate: Arg-23, Glu-80, and Lys-120. Residues 216–377 (GMKVVIAGRP…LRNHLKQSMG (162 aa)) form the TrmE-type G domain. Asn-226 is a binding site for K(+). Residues 226–231 (NAGKSS), 245–251 (TDIAGTT), 270–273 (DTAG), 335–338 (NKAD), and 358–360 (SAR) contribute to the GTP site. Ser-230 contacts Mg(2+). Thr-245, Ile-247, and Thr-250 together coordinate K(+). Thr-251 serves as a coordination point for Mg(2+). A (6S)-5-formyl-5,6,7,8-tetrahydrofolate-binding site is contributed by Lys-454.

Belongs to the TRAFAC class TrmE-Era-EngA-EngB-Septin-like GTPase superfamily. TrmE GTPase family. In terms of assembly, homodimer. Heterotetramer of two MnmE and two MnmG subunits. It depends on K(+) as a cofactor.

It is found in the cytoplasm. Exhibits a very high intrinsic GTPase hydrolysis rate. Involved in the addition of a carboxymethylaminomethyl (cmnm) group at the wobble position (U34) of certain tRNAs, forming tRNA-cmnm(5)s(2)U34. This is tRNA modification GTPase MnmE from Salmonella paratyphi C (strain RKS4594).